Here is a 341-residue protein sequence, read N- to C-terminus: Ketol-acid reductoisomerase (NADP(+)) (341 aa).

The region spanning 1–181 is the KARI N-terminal Rossmann domain; that stretch reads MARVYREGDI…GCARAGVLET (181 aa). Residues 24–27, Ser-50, Ser-52, and 82–85 contribute to the NADP(+) site; these read FGSQ and DERQ. Residue His-107 is part of the active site. NADP(+) is bound at residue Gly-133. Residues 182-327 form the KARI C-terminal knotted domain; that stretch reads TFAEETETDL…AELRALAAEG (146 aa). Mg(2+) contacts are provided by Asp-190, Glu-194, Glu-226, and Glu-230. Residue Ser-251 coordinates substrate.

This sequence belongs to the ketol-acid reductoisomerase family. Mg(2+) is required as a cofactor.

The enzyme catalyses (2R)-2,3-dihydroxy-3-methylbutanoate + NADP(+) = (2S)-2-acetolactate + NADPH + H(+). It catalyses the reaction (2R,3R)-2,3-dihydroxy-3-methylpentanoate + NADP(+) = (S)-2-ethyl-2-hydroxy-3-oxobutanoate + NADPH + H(+). The protein operates within amino-acid biosynthesis; L-isoleucine biosynthesis; L-isoleucine from 2-oxobutanoate: step 2/4. Its pathway is amino-acid biosynthesis; L-valine biosynthesis; L-valine from pyruvate: step 2/4. Involved in the biosynthesis of branched-chain amino acids (BCAA). Catalyzes an alkyl-migration followed by a ketol-acid reduction of (S)-2-acetolactate (S2AL) to yield (R)-2,3-dihydroxy-isovalerate. In the isomerase reaction, S2AL is rearranged via a Mg-dependent methyl migration to produce 3-hydroxy-3-methyl-2-ketobutyrate (HMKB). In the reductase reaction, this 2-ketoacid undergoes a metal-dependent reduction by NADPH to yield (R)-2,3-dihydroxy-isovalerate. The protein is Ketol-acid reductoisomerase (NADP(+)) of Rubrobacter xylanophilus (strain DSM 9941 / JCM 11954 / NBRC 16129 / PRD-1).